A 298-amino-acid polypeptide reads, in one-letter code: Acetylglutamate kinase (298 aa).

Substrate is bound by residues Gly-68 to Gly-69, Arg-90, and Asn-195.

The protein belongs to the acetylglutamate kinase family. ArgB subfamily.

Its subcellular location is the cytoplasm. The catalysed reaction is N-acetyl-L-glutamate + ATP = N-acetyl-L-glutamyl 5-phosphate + ADP. It functions in the pathway amino-acid biosynthesis; L-arginine biosynthesis; N(2)-acetyl-L-ornithine from L-glutamate: step 2/4. Catalyzes the ATP-dependent phosphorylation of N-acetyl-L-glutamate. The protein is Acetylglutamate kinase of Hydrogenovibrio crunogenus (strain DSM 25203 / XCL-2) (Thiomicrospira crunogena).